Here is a 264-residue protein sequence, read N- to C-terminus: MTDAALALQAENLRMTFGETKALDDVSLSVKPGEMVALIGPSGSGKSTLLRVAAALQVADAESGPVSVLGKTMQQRGKLSGRVQRNRIQLGFIFQQFNLVGRLSLFQNVLVGALGRLPTWRGVLGIFPDDVKQSAMDALTRVGVESFAARRASNLSGGQQQRGAIARALVQGAQVLFADEPIASLDPVSARKVMETLRELNKDDGLTVVVTLHQVDYAKRFCDRIVALNKGRVVYDGPADGLSRDKLIEIYGPEFETAFEGGDA.

The 248-residue stretch at 8-255 (LQAENLRMTF…KLIEIYGPEF (248 aa)) folds into the ABC transporter domain. ATP is bound at residue 40-47 (GPSGSGKS).

Belongs to the ABC transporter superfamily. Phosphonates importer (TC 3.A.1.9.1) family. In terms of assembly, the complex is composed of two ATP-binding proteins (PhnC), two transmembrane proteins (PhnE) and a solute-binding protein (PhnD).

It is found in the cell inner membrane. The enzyme catalyses phosphonate(out) + ATP + H2O = phosphonate(in) + ADP + phosphate + H(+). Functionally, part of the ABC transporter complex PhnCDE involved in phosphonates import. Responsible for energy coupling to the transport system. This is Phosphonates import ATP-binding protein PhnC from Maricaulis maris (strain MCS10) (Caulobacter maris).